Here is a 252-residue protein sequence, read N- to C-terminus: Orotidine 5'-phosphate decarboxylase (252 aa).

Substrate is bound by residues Asp-26, Lys-48, 75–84 (DLKFHDIPNT), Thr-135, Arg-196, Gln-205, Gly-225, and Arg-226. The active-site Proton donor is Lys-77.

The protein belongs to the OMP decarboxylase family. Type 1 subfamily. As to quaternary structure, homodimer.

The enzyme catalyses orotidine 5'-phosphate + H(+) = UMP + CO2. It participates in pyrimidine metabolism; UMP biosynthesis via de novo pathway; UMP from orotate: step 2/2. In terms of biological role, catalyzes the decarboxylation of orotidine 5'-monophosphate (OMP) to uridine 5'-monophosphate (UMP). In Sodalis glossinidius (strain morsitans), this protein is Orotidine 5'-phosphate decarboxylase.